We begin with the raw amino-acid sequence, 194 residues long: dITP/XTP pyrophosphatase (194 aa).

Thr8–Lys13 lines the substrate pocket. Residues Glu38 and Asp67 each contribute to the Mg(2+) site. Catalysis depends on Asp67, which acts as the Proton acceptor. Substrate is bound by residues Ser68, Phe146–Asp149, Lys169, and His174–Arg175.

Belongs to the HAM1 NTPase family. Homodimer. The cofactor is Mg(2+).

The enzyme catalyses XTP + H2O = XMP + diphosphate + H(+). The catalysed reaction is dITP + H2O = dIMP + diphosphate + H(+). It carries out the reaction ITP + H2O = IMP + diphosphate + H(+). Its function is as follows. Pyrophosphatase that catalyzes the hydrolysis of nucleoside triphosphates to their monophosphate derivatives, with a high preference for the non-canonical purine nucleotides XTP (xanthosine triphosphate), dITP (deoxyinosine triphosphate) and ITP. Seems to function as a house-cleaning enzyme that removes non-canonical purine nucleotides from the nucleotide pool, thus preventing their incorporation into DNA/RNA and avoiding chromosomal lesions. This is dITP/XTP pyrophosphatase from Synechocystis sp. (strain ATCC 27184 / PCC 6803 / Kazusa).